The primary structure comprises 1359 residues: Tripeptidyl-peptidase 2 (1359 aa).

Positions 45-81 are disordered; it reads AASTTTRGGPSPSAGVAPRAMPSSSSSPPSAAEGTTA. Low complexity predominate over residues 64–81; sequence AMPSSSSSPPSAAEGTTA. One can recognise a Peptidase S8 domain in the interval 102-600; it reads EIGVDRFLAA…HGLLQVDRAF (499 aa). Catalysis depends on charge relay system residues Asp126, His353, and Ser539.

This sequence belongs to the peptidase S8 family.

The catalysed reaction is Release of an N-terminal tripeptide from a polypeptide.. Functionally, serine protease that may function in the proteasome pathway. The sequence is that of Tripeptidyl-peptidase 2 (TPP2) from Oryza sativa subsp. japonica (Rice).